Here is a 487-residue protein sequence, read N- to C-terminus: MLLRGSRLGDISGEVLDFISSRDVDLWIAEADVLVDMAHLLMLYERGLIPREDCARILTALKELLAEGFGVLGEGEDIHEAIEAYVIERVGPAGGRMHTARSRNDEVATCIRIALREQMLGLMDELIQMIDALVRIADETRERIIPGYTHLQHAQPTTLAHHLLAHADALIRDLERFESTYERVNLSPLGAAAFASTGFDIDRYMTCELLGFSGLVENSMDAVSSRDFALEVLSDTSILMINLSRIAEEIILWSTSEFGYVEVNDLFASTSSIMPQKKNPDTAELVRAKSGTAIGSLVGALSICKALPMSYNRDLQELTPHIWRGIGAARSSLRVMRGCVSTLRFDFERLERSSTEGFTTATELADSMVRITGIPFRTAHQIVGRLARLPGKPSLEDLDRAAMVVADLRLSQMGFTAEDLERALDPRTNISMRSKPGGPAPEEVSRMLDARKKYLESASSRLAEKRSKVDSAIRRLMEGVDRTVTAT.

Belongs to the lyase 1 family. Argininosuccinate lyase subfamily.

The protein localises to the cytoplasm. The catalysed reaction is 2-(N(omega)-L-arginino)succinate = fumarate + L-arginine. It participates in amino-acid biosynthesis; L-arginine biosynthesis; L-arginine from L-ornithine and carbamoyl phosphate: step 3/3. This is Argininosuccinate lyase from Methanothrix thermoacetophila (strain DSM 6194 / JCM 14653 / NBRC 101360 / PT) (Methanosaeta thermophila).